The primary structure comprises 306 residues: BRCA2 and CDKN1A-interacting protein (306 aa).

The span at 1–10 (MASRPKRRAV) shows a compositional bias: basic residues. A disordered region spans residues 1–45 (MASRPKRRAVSRVPPALGDEEEEDEVEEQDEDDSDEEEDEEDEVV). Residues 18–45 (GDEEEEDEVEEQDEDDSDEEEDEEDEVV) show a composition bias toward acidic residues. A phosphoserine mark is found at Ser34 and Ser104. The tract at residues 51–159 (IEFEAYSISD…EKSMVEQLDR (109 aa)) is interaction with BRCA2. Positions 153-251 (MVEQLDRLFN…NAEEEFFYEK (99 aa)) are interaction with CDKN1A. The residue at position 273 (Ser273) is a Phosphoserine.

The protein belongs to the BCP1 family. Interacts with BRCA2, CDKN1A and MTDH/LYRIC. Interacts with DCTN1/p150-glued and ACTR1A/ARP1. Interacts with alpha-, beta- and gamma-tubulins. Interacts with TENT5C; the interaction has no effect on TENT5C poly(A) polymerase function.

The protein resides in the nucleus. The protein localises to the cytoplasm. It is found in the cytoskeleton. It localises to the microtubule organizing center. Its subcellular location is the centrosome. The protein resides in the centriole. The protein localises to the spindle pole. Its function is as follows. During interphase, required for microtubule organizing and anchoring activities. During mitosis, required for the organization and stabilization of the spindle pole. May promote cell cycle arrest by enhancing the inhibition of CDK2 activity by CDKN1A. May be required for repair of DNA damage by homologous recombination in conjunction with BRCA2. May not be involved in non-homologous end joining (NHEJ). The polypeptide is BRCA2 and CDKN1A-interacting protein (BCCIP) (Bos taurus (Bovine)).